We begin with the raw amino-acid sequence, 364 residues long: 4-hydroxythreonine-4-phosphate dehydrogenase (364 aa).

Substrate contacts are provided by H148 and T149. A divalent metal cation contacts are provided by H177, H216, and H301. 3 residues coordinate substrate: K309, N318, and R327.

This sequence belongs to the PdxA family. Homodimer. Zn(2+) serves as cofactor. It depends on Mg(2+) as a cofactor. The cofactor is Co(2+).

It is found in the cytoplasm. It catalyses the reaction 4-(phosphooxy)-L-threonine + NAD(+) = 3-amino-2-oxopropyl phosphate + CO2 + NADH. Its pathway is cofactor biosynthesis; pyridoxine 5'-phosphate biosynthesis; pyridoxine 5'-phosphate from D-erythrose 4-phosphate: step 4/5. Functionally, catalyzes the NAD(P)-dependent oxidation of 4-(phosphooxy)-L-threonine (HTP) into 2-amino-3-oxo-4-(phosphooxy)butyric acid which spontaneously decarboxylates to form 3-amino-2-oxopropyl phosphate (AHAP). In Campylobacter jejuni (strain RM1221), this protein is 4-hydroxythreonine-4-phosphate dehydrogenase.